The chain runs to 447 residues: Argininosuccinate synthase (447 aa).

ATP-binding positions include 17–25 and A43; that span reads AFSGGLDTS. Y99 serves as a coordination point for L-citrulline. Positions 129 and 131 each coordinate ATP. Residues T131, N135, and D136 each coordinate L-aspartate. N135 contacts L-citrulline. D136 is an ATP binding site. Residues R139 and S192 each contribute to the L-citrulline site. Residue D194 coordinates ATP. L-citrulline-binding residues include T201, E203, and E280.

Belongs to the argininosuccinate synthase family. Type 2 subfamily. Homotetramer.

Its subcellular location is the cytoplasm. It catalyses the reaction L-citrulline + L-aspartate + ATP = 2-(N(omega)-L-arginino)succinate + AMP + diphosphate + H(+). It participates in amino-acid biosynthesis; L-arginine biosynthesis; L-arginine from L-ornithine and carbamoyl phosphate: step 2/3. This is Argininosuccinate synthase from Janthinobacterium sp. (strain Marseille) (Minibacterium massiliensis).